The sequence spans 241 residues: MSPLEQFRVTKLLDIPALWGIDLSFTNCSLVMVLASVSSILLLCWALRKINVVPGPSQTAVELIYGFVANTLESNAGAEGLRYIPLVMTTFLFVLACNLVGILPFGFTATSHLSVTLALSLVVCTAITVIGFRHQGLHFLRIFLPEGTPLWLAPMMVFIKLFAYVARPVSLAIRLAANMIAGHTIIAVIADFVLKMHLVLAPLPFAFIMGLIAFEIFVAILQAYIFTVLTTVYLSDAVAGH.

A run of 7 helical transmembrane segments spans residues 27 to 47 (NCSL…CWAL), 52 to 72 (VVPG…ANTL), 87 to 107 (VMTT…PFGF), 112 to 132 (HLSV…VIGF), 142 to 162 (IFLP…IKLF), 175 to 195 (LAAN…FVLK), and 198 to 218 (LVLA…EIFV).

The protein belongs to the ATPase A chain family. As to quaternary structure, F-type ATPases have 2 components, CF(1) - the catalytic core - and CF(0) - the membrane proton channel. CF(1) has five subunits: alpha(3), beta(3), gamma(1), delta(1), epsilon(1). CF(0) has three main subunits: a(1), b(2) and c(9-12). The alpha and beta chains form an alternating ring which encloses part of the gamma chain. CF(1) is attached to CF(0) by a central stalk formed by the gamma and epsilon chains, while a peripheral stalk is formed by the delta and b chains.

It is found in the cell inner membrane. Functionally, key component of the proton channel; it plays a direct role in the translocation of protons across the membrane. The chain is ATP synthase subunit a from Anaplasma marginale (strain St. Maries).